The primary structure comprises 423 residues: Protein FAM43A (423 aa).

The segment covering 263–283 has biased composition (acidic residues); sequence EQELQEEEEEEQPEGCPEEEE. Disordered regions lie at residues 263–298, 321–344, and 382–423; these read EQEL…EAEA, RGEA…LLLG, and LSGD…PHSG. Gly residues predominate over residues 323 to 335; that stretch reads EALGGGGGSLGPG. Residues 383–393 show a composition bias toward low complexity; sequence SGDSTGSESSI. The span at 401-411 shows a compositional bias: polar residues; it reads TSATAGDSSRQ.

This sequence belongs to the FAM43 family.

This is Protein FAM43A (FAM43A) from Homo sapiens (Human).